The primary structure comprises 815 residues: (E)-gamma-bisabolene synthase (815 aa).

Residues aspartate 561, aspartate 565, aspartate 709, and glutamate 717 each contribute to the Mg(2+) site. The DDXXD motif signature appears at 561–565 (DDMYD).

The protein belongs to the terpene synthase family. Tpsd subfamily. The cofactor is Mg(2+). It depends on Mn(2+) as a cofactor.

Its subcellular location is the cytoplasm. It catalyses the reaction (2E,6E)-farnesyl diphosphate = (E)-gamma-bisabolene + diphosphate. It functions in the pathway terpene metabolism; oleoresin biosynthesis. Involved in defensive oleoresin formation in conifers in response to insect attack or other injury. Involved in sesquiterpene (C15) olefins biosynthesis. Produces mainly (E)-gamma-bisabolene when used with farnesyl diphosphate as substrate. No activity with geranyl diphosphate or geranylgeranyl diphosphate. The chain is (E)-gamma-bisabolene synthase (TPS3) from Pseudotsuga menziesii (Douglas-fir).